The following is a 578-amino-acid chain: 15-cis-phytoene desaturase, chloroplastic/chromoplastic (578 aa).

The N-terminal 87 residues, 1 to 87 (MDTGCLSSMN…PLENTINFLE (87 aa)), are a transit peptide targeting the chloroplast and chromoplast. Residues Ala-115, 134-135 (EA), Lys-142, 159-160 (HI), and Tyr-165 contribute to the FAD site. Arg-300 provides a ligand contact to substrate. Residues Ile-342 and Asp-531 each coordinate FAD. Ala-539 contacts substrate. Position 541 (Met-541) interacts with FAD.

It belongs to the carotenoid/retinoid oxidoreductase family. Homotetramer. Homotetramer is the active form of the enzyme. FAD is required as a cofactor.

The protein localises to the plastid. The protein resides in the chloroplast. It is found in the chromoplast. Its subcellular location is the membrane. It carries out the reaction 2 a plastoquinone + 15-cis-phytoene = 9,9',15-tri-cis-zeta-carotene + 2 a plastoquinol. It functions in the pathway carotenoid biosynthesis; lycopene biosynthesis. Its activity is regulated as follows. Inhibited by the herbicide norflurazon (NFZ). Converts phytoene into zeta-carotene via the intermediary of phytofluene by the symmetrical introduction of two double bonds at the C-11 and C-11' positions of phytoene with a concomitant isomerization of two neighboring double bonds at the C9 and C9' positions from trans to cis. Active with decylplastoquinone (DPQ) as substrate. Also active with other benzoquinones, which are strongly preferred over naphthoquinones as substrates. This is 15-cis-phytoene desaturase, chloroplastic/chromoplastic (PDS1) from Oryza sativa subsp. indica (Rice).